Consider the following 89-residue polypeptide: Small ribosomal subunit protein bS20 (89 aa).

Residues 68–89 (PNKGARKSSRLDHFVNEQKSKQ) form a disordered region. Basic and acidic residues predominate over residues 76–89 (SRLDHFVNEQKSKQ).

The protein belongs to the bacterial ribosomal protein bS20 family.

Its function is as follows. Binds directly to 16S ribosomal RNA. In Mycoplasmopsis agalactiae (strain NCTC 10123 / CIP 59.7 / PG2) (Mycoplasma agalactiae), this protein is Small ribosomal subunit protein bS20.